Reading from the N-terminus, the 193-residue chain is Xanthine phosphoribosyltransferase (193 aa).

Xanthine contacts are provided by L20 and T27. 5-phospho-alpha-D-ribose 1-diphosphate is bound at residue 128-132 (ANGQA). Xanthine is bound at residue K156.

It belongs to the purine/pyrimidine phosphoribosyltransferase family. Xpt subfamily. In terms of assembly, homodimer.

Its subcellular location is the cytoplasm. It carries out the reaction XMP + diphosphate = xanthine + 5-phospho-alpha-D-ribose 1-diphosphate. It participates in purine metabolism; XMP biosynthesis via salvage pathway; XMP from xanthine: step 1/1. In terms of biological role, converts the preformed base xanthine, a product of nucleic acid breakdown, to xanthosine 5'-monophosphate (XMP), so it can be reused for RNA or DNA synthesis. The sequence is that of Xanthine phosphoribosyltransferase from Streptococcus pneumoniae serotype 4 (strain ATCC BAA-334 / TIGR4).